Reading from the N-terminus, the 457-residue chain is Glutamate--tRNA ligase 1 (457 aa).

A 'HIGH' region motif is present at residues 9 to 19 (PSPTGYIHIGN). Positions 250-254 (GLSKR) match the 'KMSKS' region motif. ATP is bound at residue K253.

The protein belongs to the class-I aminoacyl-tRNA synthetase family. Glutamate--tRNA ligase type 1 subfamily. As to quaternary structure, monomer.

The protein resides in the cytoplasm. The enzyme catalyses tRNA(Glu) + L-glutamate + ATP = L-glutamyl-tRNA(Glu) + AMP + diphosphate. Catalyzes the attachment of glutamate to tRNA(Glu) in a two-step reaction: glutamate is first activated by ATP to form Glu-AMP and then transferred to the acceptor end of tRNA(Glu). This is Glutamate--tRNA ligase 1 from Brucella abortus (strain S19).